We begin with the raw amino-acid sequence, 1128 residues long: Inactive phospholipase C-like protein 2 (1128 aa).

The disordered stretch occupies residues 1-129; that stretch reads MAECGRGAAG…KKTVSFSSMP (129 aa). Residue A2 is modified to N-acetylalanine. S16 is subject to Phosphoserine. Over residues 20-30 the composition is skewed to low complexity; that stretch reads ALGAKGALKAG. The span at 31–43 shows a compositional bias: gly residues; that stretch reads AGEGGGGGGGGRL. Residue T85 is modified to Phosphothreonine. Residues 142–252 enclose the PH domain; the sequence is NSMVEGSELK…WVTGLRYLIS (111 aa). The PI-PLC X-box domain maps to 427–571; the sequence is QDMKQPLSHY…LKGKILIKAK (145 aa). T585 is subject to Phosphothreonine. The 117-residue stretch at 619 to 735 folds into the PI-PLC Y-box domain; the sequence is LSELVSICKS…GYVLRPAIMR (117 aa). The C2 domain occupies 735–864; the sequence is REEVSFFSAN…TGYRHVPLQS (130 aa). The interval 1100–1128 is disordered; the sequence is KPGTENSEAQKPRRSLEAIPEKASDENGD. A compositionally biased stretch (basic and acidic residues) spans 1107–1128; sequence EAQKPRRSLEAIPEKASDENGD. S1114 is subject to Phosphoserine.

As to expression, ubiquitously expressed, with a strong expression in skeletal muscle.

Its subcellular location is the cytoplasm. Functionally, may play an role in the regulation of Ins(1,4,5)P3 around the endoplasmic reticulum. The sequence is that of Inactive phospholipase C-like protein 2 (Plcl2) from Mus musculus (Mouse).